A 240-amino-acid chain; its full sequence is UDP-2,3-diacylglucosamine hydrolase (240 aa).

Mn(2+) contacts are provided by Asp-9, His-11, Asp-43, Asn-81, and His-116. 81–82 (NR) is a substrate binding site. Positions 124, 162, 166, 169, and 197 each coordinate substrate. Residues His-197 and His-199 each contribute to the Mn(2+) site.

This sequence belongs to the LpxH family. Mn(2+) is required as a cofactor.

It localises to the cell inner membrane. The enzyme catalyses UDP-2-N,3-O-bis[(3R)-3-hydroxytetradecanoyl]-alpha-D-glucosamine + H2O = 2-N,3-O-bis[(3R)-3-hydroxytetradecanoyl]-alpha-D-glucosaminyl 1-phosphate + UMP + 2 H(+). Its pathway is glycolipid biosynthesis; lipid IV(A) biosynthesis; lipid IV(A) from (3R)-3-hydroxytetradecanoyl-[acyl-carrier-protein] and UDP-N-acetyl-alpha-D-glucosamine: step 4/6. Hydrolyzes the pyrophosphate bond of UDP-2,3-diacylglucosamine to yield 2,3-diacylglucosamine 1-phosphate (lipid X) and UMP by catalyzing the attack of water at the alpha-P atom. Involved in the biosynthesis of lipid A, a phosphorylated glycolipid that anchors the lipopolysaccharide to the outer membrane of the cell. The sequence is that of UDP-2,3-diacylglucosamine hydrolase from Neisseria meningitidis serogroup A / serotype 4A (strain DSM 15465 / Z2491).